The chain runs to 89 residues: Small ribosomal subunit protein uS14A (89 aa).

This sequence belongs to the universal ribosomal protein uS14 family. In terms of assembly, part of the 30S ribosomal subunit. Contacts proteins S3 and S10.

Functionally, binds 16S rRNA, required for the assembly of 30S particles and may also be responsible for determining the conformation of the 16S rRNA at the A site. This Staphylococcus haemolyticus (strain JCSC1435) protein is Small ribosomal subunit protein uS14A.